The primary structure comprises 210 residues: UPF0301 protein Mnod_6933 (210 aa).

The protein belongs to the UPF0301 (AlgH) family.

This chain is UPF0301 protein Mnod_6933, found in Methylobacterium nodulans (strain LMG 21967 / CNCM I-2342 / ORS 2060).